We begin with the raw amino-acid sequence, 583 residues long: MLRLFRFDVLETSTKDTERPNSKSSRLSSTSGSSHPSSSSRLTVRSAVPEKSAFGSIEFIFYFSVILSILTIACFKIHYVSSPKHPNYKNIEKYLKPGWLFGQKVDSADFQYSAFRENMPILLLVIIVYNFLWRLVKLVFTKNTNDELAIKNNYRLCFSLLFALLVYGTGVIYVLTIALINYLISKSLKNSIFNPLLTWTLDISVVFFKEYFAYCKFSSLHPGLGFLDQYTGILERWYVLFNITMLRLVSFNMDYYWSLKHNSEKLNTLIFDKDREPTTLTFRERVDYSCLDEDYNLKNFLTYIFYAPLYLAGPIISFNNFMSQMKYPTVSTLKYRNLLYAIRFLVCVLTMEFLLHYAYVTAISKDGNWNQYSAVESAMISFIVLFMTWLKLLIPWRLFRLWSLIDDIEPPENIVRCMCNNYSAVGFWRAWHRSFNRWLIRYIYVPLGGSNHSILNLFIIFTFVALWHDISWELFAWGWLIVLFILPERLCCFMSRRTGLTKHPYYRYISGFGAALNIYFMIICNLIGFAVGIDGIKNVLVSFFLTLKGAMSAIAAFIMFFSAVQIMFQIRVNEEEEGINLRC.

The Extracellular portion of the chain corresponds to 1 to 52; the sequence is MLRLFRFDVLETSTKDTERPNSKSSRLSSTSGSSHPSSSSRLTVRSAVPEKS. Positions 15–42 are disordered; the sequence is KDTERPNSKSSRLSSTSGSSHPSSSSRL. A compositionally biased stretch (low complexity) spans 22–40; the sequence is SKSSRLSSTSGSSHPSSSS. The helical transmembrane segment at 53 to 73 threads the bilayer; it reads AFGSIEFIFYFSVILSILTIA. At 74 to 119 the chain is on the cytoplasmic side; that stretch reads CFKIHYVSSPKHPNYKNIEKYLKPGWLFGQKVDSADFQYSAFRENM. A helical transmembrane segment spans residues 120 to 140; that stretch reads PILLLVIIVYNFLWRLVKLVF. Over 141 to 159 the chain is Extracellular; it reads TKNTNDELAIKNNYRLCFS. Residues 160 to 180 form a helical membrane-spanning segment; it reads LLFALLVYGTGVIYVLTIALI. Over 181 to 191 the chain is Cytoplasmic; the sequence is NYLISKSLKNS. Residues 192 to 212 traverse the membrane as a helical segment; sequence IFNPLLTWTLDISVVFFKEYF. Residues 213–298 lie on the Extracellular side of the membrane; sequence AYCKFSSLHP…SCLDEDYNLK (86 aa). The helical transmembrane segment at 299-319 threads the bilayer; that stretch reads NFLTYIFYAPLYLAGPIISFN. Residues 320–343 lie on the Cytoplasmic side of the membrane; it reads NFMSQMKYPTVSTLKYRNLLYAIR. A helical membrane pass occupies residues 344–364; it reads FLVCVLTMEFLLHYAYVTAIS. Residues 365–373 lie on the Extracellular side of the membrane; sequence KDGNWNQYS. The chain crosses the membrane as a helical span at residues 374–394; it reads AVESAMISFIVLFMTWLKLLI. The Cytoplasmic portion of the chain corresponds to 395–444; it reads PWRLFRLWSLIDDIEPPENIVRCMCNNYSAVGFWRAWHRSFNRWLIRYIY. Transmembrane regions (helical) follow at residues 445–465 and 466–486; these read VPLG…TFVA and LWHD…LFIL. His-468 is an active-site residue. Residues 487–512 are Cytoplasmic-facing; the sequence is PERLCCFMSRRTGLTKHPYYRYISGF. A helical transmembrane segment spans residues 513–533; the sequence is GAALNIYFMIICNLIGFAVGI. The Extracellular portion of the chain corresponds to 534 to 549; that stretch reads DGIKNVLVSFFLTLKG. Residues 550 to 570 traverse the membrane as a helical segment; sequence AMSAIAAFIMFFSAVQIMFQI. The Cytoplasmic segment spans residues 571–583; the sequence is RVNEEEEGINLRC.

This sequence belongs to the membrane-bound acyltransferase family.

Its subcellular location is the cell membrane. It localises to the endoplasmic reticulum membrane. It is found in the mitochondrion membrane. Its function is as follows. Membrane-bound O-acyltransferase involved in the remodeling of glycosylphosphatidylinositol (GPI) anchors. Acts only on GPI-anchored proteins, but not on free GPI lipids. Also involved in lipid metabolism, having profound effects on sphingolipid-sterol-ordered domains integrity and assembly. Involved in cell integrity and apoptosis. The protein is Membrane-bound O-acyltransferase gup1 (gup1) of Schizosaccharomyces pombe (strain 972 / ATCC 24843) (Fission yeast).